The primary structure comprises 1438 residues: DNA-directed RNA polymerase subunit beta' (1438 aa).

The Zn(2+) site is built by C72, C74, C87, and C90. Mg(2+)-binding residues include D483, D485, and D487. Positions 831, 905, 912, and 915 each coordinate Zn(2+).

Belongs to the RNA polymerase beta' chain family. As to quaternary structure, the RNAP catalytic core consists of 2 alpha, 1 beta, 1 beta' and 1 omega subunit. When a sigma factor is associated with the core the holoenzyme is formed, which can initiate transcription. It depends on Mg(2+) as a cofactor. Zn(2+) is required as a cofactor.

The enzyme catalyses RNA(n) + a ribonucleoside 5'-triphosphate = RNA(n+1) + diphosphate. Functionally, DNA-dependent RNA polymerase catalyzes the transcription of DNA into RNA using the four ribonucleoside triphosphates as substrates. The sequence is that of DNA-directed RNA polymerase subunit beta' from Flavobacterium psychrophilum (strain ATCC 49511 / DSM 21280 / CIP 103535 / JIP02/86).